The sequence spans 287 residues: Phosphatidylserine decarboxylase proenzyme (287 aa).

Active-site charge relay system; for autoendoproteolytic cleavage activity residues include aspartate 89, histidine 146, and serine 252. Catalysis depends on serine 252, which acts as the Schiff-base intermediate with substrate; via pyruvic acid; for decarboxylase activity. A Pyruvic acid (Ser); by autocatalysis modification is found at serine 252.

The protein belongs to the phosphatidylserine decarboxylase family. PSD-B subfamily. Prokaryotic type I sub-subfamily. In terms of assembly, heterodimer of a large membrane-associated beta subunit and a small pyruvoyl-containing alpha subunit. Requires pyruvate as cofactor. In terms of processing, is synthesized initially as an inactive proenzyme. Formation of the active enzyme involves a self-maturation process in which the active site pyruvoyl group is generated from an internal serine residue via an autocatalytic post-translational modification. Two non-identical subunits are generated from the proenzyme in this reaction, and the pyruvate is formed at the N-terminus of the alpha chain, which is derived from the carboxyl end of the proenzyme. The autoendoproteolytic cleavage occurs by a canonical serine protease mechanism, in which the side chain hydroxyl group of the serine supplies its oxygen atom to form the C-terminus of the beta chain, while the remainder of the serine residue undergoes an oxidative deamination to produce ammonia and the pyruvoyl prosthetic group on the alpha chain. During this reaction, the Ser that is part of the protease active site of the proenzyme becomes the pyruvoyl prosthetic group, which constitutes an essential element of the active site of the mature decarboxylase.

It is found in the cell membrane. It carries out the reaction a 1,2-diacyl-sn-glycero-3-phospho-L-serine + H(+) = a 1,2-diacyl-sn-glycero-3-phosphoethanolamine + CO2. The protein operates within phospholipid metabolism; phosphatidylethanolamine biosynthesis; phosphatidylethanolamine from CDP-diacylglycerol: step 2/2. Catalyzes the formation of phosphatidylethanolamine (PtdEtn) from phosphatidylserine (PtdSer). This chain is Phosphatidylserine decarboxylase proenzyme, found in Shewanella sediminis (strain HAW-EB3).